The sequence spans 182 residues: ATP-dependent protease subunit HslV (182 aa).

Thr-10 is a catalytic residue. Na(+)-binding residues include Ala-166, Cys-169, and Ser-172.

Belongs to the peptidase T1B family. HslV subfamily. In terms of assembly, a double ring-shaped homohexamer of HslV is capped on each side by a ring-shaped HslU homohexamer. The assembly of the HslU/HslV complex is dependent on binding of ATP.

Its subcellular location is the cytoplasm. The enzyme catalyses ATP-dependent cleavage of peptide bonds with broad specificity.. Its activity is regulated as follows. Allosterically activated by HslU binding. In terms of biological role, protease subunit of a proteasome-like degradation complex believed to be a general protein degrading machinery. This chain is ATP-dependent protease subunit HslV, found in Rickettsia prowazekii (strain Madrid E).